The primary structure comprises 355 residues: Neutral protease 2 homolog MEP6 (355 aa).

The signal sequence occupies residues 1 to 19 (MRLSSSLIALVALAGQALA). Residues 20-179 (LPFNELAERD…ASAIPELNKR (160 aa)) constitute a propeptide that is removed on maturation. 2 disulfide bridges follow: C187–C259 and C266–C283. H307 contributes to the Zn(2+) binding site. E308 is a catalytic residue. H311 and D322 together coordinate Zn(2+).

The protein belongs to the peptidase M35 family. The cofactor is Zn(2+).

Its subcellular location is the secreted. It carries out the reaction Preferential cleavage of bonds with hydrophobic residues in P1'. Also 3-Asn-|-Gln-4 and 8-Gly-|-Ser-9 bonds in insulin B chain.. Its function is as follows. Secreted metalloproteinase that allows assimilation of proteinaceous substrates. Shows high activities on basic nuclear substrates such as histone and protamine. May be involved in virulence. The polypeptide is Neutral protease 2 homolog MEP6 (MEP6) (Coccidioides posadasii (strain C735) (Valley fever fungus)).